The primary structure comprises 339 residues: MFFNRERELEKLLRLVSTEPNLITFVYGPINSGKTALMMEFIKKLPDDHIAFYINLRRTPITSYSDFVDVLFSVEFRNKVKTLKEAVSLVLSAGKETFGFPVPTELLARITKEKKPKNAFAYIVTLMEEVRKAGKRPILILDELQVIGDLKVDGSLIYELFNFFIHLTKESHLSHVFVVTSDSLFIERVYSEAMLQGRAEYFLVDDFKRETALRFLKNNGLSDDEAELVWNYFGGKPVYLAETIKHRDELKEWCERMLKLRTSQILDELYALEKELFEKVVKLFFAFEKQESVPYRSLSEEILWAVKRNILFAEPVDRVLRPQGRLELLAIKRILDIIE.

28-35 (GPINSGKT) is an ATP binding site.

The protein belongs to the archaeal ATPase family.

This is an uncharacterized protein from Pyrococcus abyssi (strain GE5 / Orsay).